A 1349-amino-acid polypeptide reads, in one-letter code: Aldehyde oxidase 2 (1349 aa).

One can recognise a 2Fe-2S ferredoxin-type domain in the interval 8–96; that stretch reads DELVFFVNGR…GAAVTTVEGV (89 aa). [2Fe-2S] cluster contacts are provided by Cys47, Cys52, Cys55, and Cys78. Residue Gln117 coordinates Mo-molybdopterin. Positions 118, 121, 153, and 155 each coordinate [2Fe-2S] cluster. Residue Cys155 participates in Mo-molybdopterin binding. The region spanning 240-425 is the FAD-binding PCMH-type domain; sequence FYGERVTWIS…ESVHIPHSQK (186 aa). FAD contacts are provided by residues 268-275, Ala349, Ser358, His362, Asp371, and Leu415; that span reads LVVGNTSL. Mo-molybdopterin-binding positions include 816–817, 1098–1101, Gln1213, and Leu1278; these read GF and ASVG. Catalysis depends on Glu1280, which acts as the Proton acceptor; for azaheterocycle hydroxylase activity.

It belongs to the xanthine dehydrogenase family. Homodimer. [2Fe-2S] cluster serves as cofactor. FAD is required as a cofactor. The cofactor is Mo-molybdopterin. In terms of tissue distribution, only detected at very few levels in nasal mucosa.

The protein resides in the cytoplasm. It carries out the reaction an aldehyde + O2 + H2O = a carboxylate + H2O2 + H(+). Its function is as follows. Oxidase with broad substrate specificity, oxidizing aromatic azaheterocycles, such as phthalazine, as well as aldehydes, such as benzaldehyde and retinal. The protein is Aldehyde oxidase 2 (AOX2) of Macaca fascicularis (Crab-eating macaque).